Reading from the N-terminus, the 703-residue chain is Polyribonucleotide nucleotidyltransferase (703 aa).

Mg(2+)-binding residues include Asp-484 and Asp-490. Positions 551–610 (PTVTTLRVLPEKISVIIGPAGKNIKKIIEETGVKIDLDPTGLVKIYATSKIAAEKAIDMI) constitute a KH domain. One can recognise an S1 motif domain in the interval 620-688 (GEVYLGKVTR…DQGRIKVSLK (69 aa)).

This sequence belongs to the polyribonucleotide nucleotidyltransferase family. The cofactor is Mg(2+).

It localises to the cytoplasm. It carries out the reaction RNA(n+1) + phosphate = RNA(n) + a ribonucleoside 5'-diphosphate. In terms of biological role, involved in mRNA degradation. Catalyzes the phosphorolysis of single-stranded polyribonucleotides processively in the 3'- to 5'-direction. The protein is Polyribonucleotide nucleotidyltransferase of Sulfurihydrogenibium sp. (strain YO3AOP1).